We begin with the raw amino-acid sequence, 258 residues long: Hydroxyethylthiazole kinase (258 aa).

M37 is a binding site for substrate. Residues R112 and T158 each coordinate ATP. Substrate is bound at residue A185.

The protein belongs to the Thz kinase family. The cofactor is Mg(2+).

The enzyme catalyses 5-(2-hydroxyethyl)-4-methylthiazole + ATP = 4-methyl-5-(2-phosphooxyethyl)-thiazole + ADP + H(+). It participates in cofactor biosynthesis; thiamine diphosphate biosynthesis; 4-methyl-5-(2-phosphoethyl)-thiazole from 5-(2-hydroxyethyl)-4-methylthiazole: step 1/1. Its function is as follows. Catalyzes the phosphorylation of the hydroxyl group of 4-methyl-5-beta-hydroxyethylthiazole (THZ). This Rhizobium etli (strain CIAT 652) protein is Hydroxyethylthiazole kinase.